A 200-amino-acid chain; its full sequence is Recombination protein RecR (200 aa).

The C4-type zinc finger occupies 59–74; that stretch reads CEKCNTFTEAQVCEVC. In terms of domain architecture, Toprim spans 82 to 177; it reads ALLCVVETPA…AVTRLARGVP (96 aa).

This sequence belongs to the RecR family.

Its function is as follows. May play a role in DNA repair. It seems to be involved in an RecBC-independent recombinational process of DNA repair. It may act with RecF and RecO. In Burkholderia pseudomallei (strain 1106a), this protein is Recombination protein RecR.